An 88-amino-acid chain; its full sequence is Elongation factor 1-beta (88 aa).

Belongs to the EF-1-beta/EF-1-delta family.

In terms of biological role, promotes the exchange of GDP for GTP in EF-1-alpha/GDP, thus allowing the regeneration of EF-1-alpha/GTP that could then be used to form the ternary complex EF-1-alpha/GTP/AAtRNA. This chain is Elongation factor 1-beta (ef1b), found in Thermoplasma volcanium (strain ATCC 51530 / DSM 4299 / JCM 9571 / NBRC 15438 / GSS1).